Consider the following 92-residue polypeptide: Acyl-CoA-binding protein (92 aa).

The ACB domain maps to leucine 3–serine 88. An acyl-CoA contacts are provided by residues tyrosine 30–lysine 34, lysine 56, and tyrosine 75.

The protein belongs to the ACBP family.

Binds medium- and long-chain acyl-CoA esters with very high affinity and may function as an intracellular carrier of acyl-CoA esters. The polypeptide is Acyl-CoA-binding protein (Brassica napus (Rape)).